Consider the following 399-residue polypeptide: Elongation factor Tu (399 aa).

The region spanning 10–209 (KPHVNIGTIG…EVDAYIPTPK (200 aa)) is the tr-type G domain. The G1 stretch occupies residues 19-26 (GHVDHGKT). 19–26 (GHVDHGKT) is a GTP binding site. Thr26 serves as a coordination point for Mg(2+). A G2 region spans residues 60–64 (GITIA). Residues 81-84 (DCPG) are G3. Residues 81 to 85 (DCPGH) and 136 to 139 (NKQD) contribute to the GTP site. Residues 136–139 (NKQD) are G4. The segment at 174–176 (SAL) is G5.

The protein belongs to the TRAFAC class translation factor GTPase superfamily. Classic translation factor GTPase family. EF-Tu/EF-1A subfamily. In terms of assembly, monomer.

It localises to the cytoplasm. It carries out the reaction GTP + H2O = GDP + phosphate + H(+). In terms of biological role, GTP hydrolase that promotes the GTP-dependent binding of aminoacyl-tRNA to the A-site of ribosomes during protein biosynthesis. The chain is Elongation factor Tu from Helicobacter pylori (strain P12).